Consider the following 97-residue polypeptide: Protein RnfH (97 aa).

This sequence belongs to the UPF0125 (RnfH) family.

This chain is Protein RnfH, found in Halorhodospira halophila (strain DSM 244 / SL1) (Ectothiorhodospira halophila (strain DSM 244 / SL1)).